The sequence spans 182 residues: Adenine phosphoribosyltransferase (182 aa).

The protein belongs to the purine/pyrimidine phosphoribosyltransferase family. In terms of assembly, homodimer.

It is found in the cytoplasm. It carries out the reaction AMP + diphosphate = 5-phospho-alpha-D-ribose 1-diphosphate + adenine. It functions in the pathway purine metabolism; AMP biosynthesis via salvage pathway; AMP from adenine: step 1/1. Its function is as follows. Catalyzes a salvage reaction resulting in the formation of AMP, that is energically less costly than de novo synthesis. The sequence is that of Adenine phosphoribosyltransferase from Campylobacter jejuni subsp. jejuni serotype O:23/36 (strain 81-176).